The following is a 107-amino-acid chain: UPF0122 protein BLi01817/BL02321 (107 aa).

This sequence belongs to the UPF0122 family.

Might take part in the signal recognition particle (SRP) pathway. This is inferred from the conservation of its genetic proximity to ftsY/ffh. May be a regulatory protein. This chain is UPF0122 protein BLi01817/BL02321, found in Bacillus licheniformis (strain ATCC 14580 / DSM 13 / JCM 2505 / CCUG 7422 / NBRC 12200 / NCIMB 9375 / NCTC 10341 / NRRL NRS-1264 / Gibson 46).